A 181-amino-acid chain; its full sequence is dCTP deaminase (181 aa).

DCTP contacts are provided by residues 100–105 (RSTFAR) and Asp-116. Glu-126 (proton donor/acceptor) is an active-site residue. Residues Tyr-158 and Gln-165 each contribute to the dCTP site. Residues 160-181 (GKYQGQRGVTPPKLDNSSSKNF) form a disordered region.

The protein belongs to the dCTP deaminase family. Homotrimer.

It carries out the reaction dCTP + H2O + H(+) = dUTP + NH4(+). Its pathway is pyrimidine metabolism; dUMP biosynthesis; dUMP from dCTP (dUTP route): step 1/2. Catalyzes the deamination of dCTP to dUTP. The protein is dCTP deaminase of Desulfurococcus amylolyticus (strain DSM 18924 / JCM 16383 / VKM B-2413 / 1221n) (Desulfurococcus kamchatkensis).